Reading from the N-terminus, the 419-residue chain is uncharacterized protein (419 aa).

This is an uncharacterized protein from Acinetobacter baylyi (strain ATCC 33305 / BD413 / ADP1).